The following is a 61-amino-acid chain: Small ribosomal subunit protein uS14B (61 aa).

Cysteine 24, cysteine 27, cysteine 40, and cysteine 43 together coordinate Zn(2+).

Belongs to the universal ribosomal protein uS14 family. Zinc-binding uS14 subfamily. As to quaternary structure, part of the 30S ribosomal subunit. Contacts proteins S3 and S10. Zn(2+) serves as cofactor.

Binds 16S rRNA, required for the assembly of 30S particles and may also be responsible for determining the conformation of the 16S rRNA at the A site. This chain is Small ribosomal subunit protein uS14B, found in Mycobacterium bovis (strain ATCC BAA-935 / AF2122/97).